We begin with the raw amino-acid sequence, 239 residues long: Ribonuclease PH (239 aa).

Residues arginine 86 and glycine 124–arginine 126 contribute to the phosphate site.

The protein belongs to the RNase PH family. Homohexameric ring arranged as a trimer of dimers.

The enzyme catalyses tRNA(n+1) + phosphate = tRNA(n) + a ribonucleoside 5'-diphosphate. Phosphorolytic 3'-5' exoribonuclease that plays an important role in tRNA 3'-end maturation. Removes nucleotide residues following the 3'-CCA terminus of tRNAs; can also add nucleotides to the ends of RNA molecules by using nucleoside diphosphates as substrates, but this may not be physiologically important. Probably plays a role in initiation of 16S rRNA degradation (leading to ribosome degradation) during starvation. This is Ribonuclease PH from Rhizobium johnstonii (strain DSM 114642 / LMG 32736 / 3841) (Rhizobium leguminosarum bv. viciae).